Here is a 149-residue protein sequence, read N- to C-terminus: Nucleoside diphosphate kinase (149 aa).

Residues Lys-9, Phe-57, Arg-85, Thr-91, Arg-102, and Asn-112 each coordinate ATP. His-115 acts as the Pros-phosphohistidine intermediate in catalysis.

It belongs to the NDK family. Mg(2+) is required as a cofactor.

Its subcellular location is the cytoplasm. The catalysed reaction is a 2'-deoxyribonucleoside 5'-diphosphate + ATP = a 2'-deoxyribonucleoside 5'-triphosphate + ADP. It carries out the reaction a ribonucleoside 5'-diphosphate + ATP = a ribonucleoside 5'-triphosphate + ADP. Major role in the synthesis of nucleoside triphosphates other than ATP. The ATP gamma phosphate is transferred to the NDP beta phosphate via a ping-pong mechanism, using a phosphorylated active-site intermediate. The sequence is that of Nucleoside diphosphate kinase from Methanosarcina acetivorans (strain ATCC 35395 / DSM 2834 / JCM 12185 / C2A).